We begin with the raw amino-acid sequence, 423 residues long: Gamma-glutamyl phosphate reductase (423 aa).

Belongs to the gamma-glutamyl phosphate reductase family.

The protein localises to the cytoplasm. It carries out the reaction L-glutamate 5-semialdehyde + phosphate + NADP(+) = L-glutamyl 5-phosphate + NADPH + H(+). The protein operates within amino-acid biosynthesis; L-proline biosynthesis; L-glutamate 5-semialdehyde from L-glutamate: step 2/2. Catalyzes the NADPH-dependent reduction of L-glutamate 5-phosphate into L-glutamate 5-semialdehyde and phosphate. The product spontaneously undergoes cyclization to form 1-pyrroline-5-carboxylate. The sequence is that of Gamma-glutamyl phosphate reductase from Pseudomonas entomophila (strain L48).